Here is a 134-residue protein sequence, read N- to C-terminus: Acyl carrier protein, chloroplastic (134 aa).

A chloroplast-targeting transit peptide spans 1 to 51 (MSTTFCSSVSMQATSLAATTRISFQKPALVSRTNLSFNLSRSIPTRLSVSC). The Carrier domain maps to 55–130 (PETVEKVSKI…EAAELIDELV (76 aa)). At serine 90 the chain carries O-(pantetheine 4'-phosphoryl)serine.

This sequence belongs to the acyl carrier protein (ACP) family. 4'-phosphopantetheine is transferred from CoA to a specific serine of apo-ACP by acpS. This modification is essential for activity because fatty acids are bound in thioester linkage to the sulfhydryl of the prosthetic group. As to expression, seed.

It is found in the plastid. Its subcellular location is the chloroplast. The protein operates within lipid metabolism; fatty acid biosynthesis. Carrier of the growing fatty acid chain in fatty acid biosynthesis. This is Acyl carrier protein, chloroplastic (ACL1.A1) from Brassica napus (Rape).